The following is a 450-amino-acid chain: MSLLQFSGLFVVWLLCTLFIATLTWFEFRRVRFNFNVFFSLLFLLTFFFGFPLTSVLVFRFDVGVAPPEILLQALLSAGCFYAVYYVTYKTRLRKRVADVPRRPLFTMNRVETNLTWVILMGVALVSVGIFFMHNGFLLFRLNSYSQIFSSEVSGVALKRFFYFFIPAMLVVYFLRQDSKAWLFFLVSTVAFGLLTYMIVGGTRANIIIAFAIFLFIGIIRGWISLWMLAAAGVLGIVGMFWLALKRYGMNVSGDEAFYTFLYLTRDTFSPWENLALLLQNYDNIDFQGLAPIVRDFYVFIPSWLWPGRPSMVLNTANYFTWEVLNNHSGLAISPTLIGSLVVMGGALFIPLGAIVVGLIIKWFDWLYELGNREPNRYKAAILHSFCFGAIFNMIVLAREGLDSFVSRVVFFIVVFGACLMIAKLLYWLFESAGLIHKRTKSSLRTQVEG.

11 helical membrane passes run 6-26, 37-57, 63-83, 118-138, 155-175, 181-201, 207-227, 228-248, 341-361, 378-398, and 410-430; these read FSGL…LTWF, VFFS…TSVL, VGVA…CFYA, VILM…NGFL, GVAL…VYFL, AWLF…MIVG, IIIA…ISLW, MLAA…LKRY, LVVM…GLII, YKAA…IVLA, and VFFI…YWLF.

This sequence belongs to the WzyE family. In terms of assembly, probably part of a complex composed of WzxE, WzyE and WzzE.

Its subcellular location is the cell inner membrane. The protein operates within bacterial outer membrane biogenesis; enterobacterial common antigen biosynthesis. Its function is as follows. Probably involved in the polymerization of enterobacterial common antigen (ECA) trisaccharide repeat units. In Escherichia coli O17:K52:H18 (strain UMN026 / ExPEC), this protein is Probable ECA polymerase.